Consider the following 397-residue polypeptide: F-box protein At5g25290 (397 aa).

In terms of domain architecture, F-box spans 11 to 56 (VTLWSEIPMDILRSVFERLSFVDLHRAKIVCSHWYSCSKQSFLRKT).

The protein is F-box protein At5g25290 of Arabidopsis thaliana (Mouse-ear cress).